Consider the following 205-residue polypeptide: Ribosome maturation factor RimP (205 aa).

Residues 1–12 (MSNAEAQASSDH) are compositionally biased toward polar residues. Disordered regions lie at residues 1-24 (MSNAEAQASSDHTAPGKADTAPAH) and 186-205 (FSHLSEDGLEPEHNGPSEEA).

Belongs to the RimP family.

The protein resides in the cytoplasm. Required for maturation of 30S ribosomal subunits. This chain is Ribosome maturation factor RimP, found in Pseudarthrobacter chlorophenolicus (strain ATCC 700700 / DSM 12829 / CIP 107037 / JCM 12360 / KCTC 9906 / NCIMB 13794 / A6) (Arthrobacter chlorophenolicus).